Here is a 165-residue protein sequence, read N- to C-terminus: Shikimate kinase (165 aa).

Residue 11-16 (GAGKTT) coordinates ATP. Thr15 lines the Mg(2+) pocket. Asp33, Arg57, and Gly78 together coordinate substrate. Arg116 contributes to the ATP binding site. Arg134 lines the substrate pocket.

Belongs to the shikimate kinase family. Monomer. Mg(2+) serves as cofactor.

The protein resides in the cytoplasm. The enzyme catalyses shikimate + ATP = 3-phosphoshikimate + ADP + H(+). It participates in metabolic intermediate biosynthesis; chorismate biosynthesis; chorismate from D-erythrose 4-phosphate and phosphoenolpyruvate: step 5/7. Catalyzes the specific phosphorylation of the 3-hydroxyl group of shikimic acid using ATP as a cosubstrate. This is Shikimate kinase from Bacillus cytotoxicus (strain DSM 22905 / CIP 110041 / 391-98 / NVH 391-98).